The primary structure comprises 205 residues: Glycerol-3-phosphate acyltransferase (205 aa).

Helical transmembrane passes span 3–23, 53–73, 80–100, 112–132, and 138–158; these read VFAL…SAIL, GVAA…VWLA, PFYL…PVFF, LGAI…TWLL, and GYSS…VWWF.

This sequence belongs to the PlsY family. As to quaternary structure, probably interacts with PlsX.

Its subcellular location is the cell inner membrane. It catalyses the reaction an acyl phosphate + sn-glycerol 3-phosphate = a 1-acyl-sn-glycero-3-phosphate + phosphate. The protein operates within lipid metabolism; phospholipid metabolism. Catalyzes the transfer of an acyl group from acyl-phosphate (acyl-PO(4)) to glycerol-3-phosphate (G3P) to form lysophosphatidic acid (LPA). This enzyme utilizes acyl-phosphate as fatty acyl donor, but not acyl-CoA or acyl-ACP. The chain is Glycerol-3-phosphate acyltransferase from Erwinia tasmaniensis (strain DSM 17950 / CFBP 7177 / CIP 109463 / NCPPB 4357 / Et1/99).